The following is a 585-amino-acid chain: Ankyrin repeat protein OPG003 (585 aa).

5 ANK repeats span residues 66-98, 172-220, 224-256, 297-333, and 336-365; these read CGMS…NFDN, DGLT…NINA, IGNT…DTRI, EGHH…QKDE, and NTMT…DINL. The tract at residues 554 to 571 is PRANC/F-box-like; it reads LPPEIIRNIITKLSDYHL.

The protein belongs to the orthopoxvirus OPG003 family.

Its function is as follows. May be involved in virus-host protein interaction through the ankyrin repeats and PRANC regions. The polypeptide is Ankyrin repeat protein OPG003 (OPG003) (Homo sapiens (Human)).